Here is a 536-residue protein sequence, read N- to C-terminus: Small conductance calcium-activated potassium channel protein 1 (536 aa).

Residues 1 to 90 (MSSRSHNGSV…KPPTVSHRLG (90 aa)) form a disordered region. Acidic residues predominate over residues 65–75 (QEEEEEEEDED). The helical transmembrane segment at 107-127 (LIFGMFGIVVMVTETELSWGV) threads the bilayer. The chain crosses the membrane as a helical span at residues 136–156 (FALKCLISLSTVILLGLVILY). A helical transmembrane segment spans residues 224-244 (VLLSIPMFLRLYLLARVMLLH). A helical transmembrane segment spans residues 273 to 293 (LMTICPGTVLLVFSISSWIVA). A helical membrane pass occupies residues 313 to 333 (FLGAMWLISITFLSIGYGDMV). Positions 342 to 362 (VCLLTGIMGAGCTALVVAVVA) form an intramembrane region, pore-forming. The calmodulin-binding stretch occupies residues 380–459 (DTQLTKRVKN…LADLAKAQSI (80 aa)). A helical membrane pass occupies residues 487–507 (VLGASLQALPSLIAQAICPLP). The segment at 514-536 (SHLTTAAQSPQSHWLPTTASDCG) is disordered. Positions 515 to 536 (HLTTAAQSPQSHWLPTTASDCG) are enriched in polar residues.

It belongs to the potassium channel KCNN family. KCa2.1/KCNN1 subfamily. Homodimer. Heteromultimer with KCNN2 and KCNN3. The complex is composed of 4 channel subunits each of which binds to a calmodulin subunit which regulates the channel activity through calcium-binding. Interacts with calmodulin. Widely expressed including brain.

The protein localises to the membrane. It localises to the cytoplasm. Its subcellular location is the myofibril. The protein resides in the sarcomere. It is found in the z line. It carries out the reaction K(+)(in) = K(+)(out). With respect to regulation, inhibited by bee venom neurotoxin apamin. Inhibited by d-tubocurarine and tetraethylammonium (TEA). Functionally, small conductance calcium-activated potassium channel that mediates the voltage-independent transmembrane transfer of potassium across the cell membrane through a constitutive interaction with calmodulin which binds the intracellular calcium allowing its opening. The current is characterized by a voltage-independent activation, an intracellular calcium concentration increase-dependent activation and a single-channel conductance of about 3 picosiemens. Also presents an inwardly rectifying current, thus reducing its already small outward conductance of potassium ions, which is particularly the case when the membrane potential displays positive values, above + 20 mV. Activation is followed by membrane hyperpolarization. Thought to regulate neuronal excitability by contributing to the slow component of synaptic afterhyperpolarization. This chain is Small conductance calcium-activated potassium channel protein 1, found in Rattus norvegicus (Rat).